We begin with the raw amino-acid sequence, 27 residues long: Trichocyst matrix protein T4-C (27 aa).

Belongs to the TMP family.

The protein resides in the trichocyst. Functionally, structural protein that crystallize inside the trichocyst matrix. The protein is Trichocyst matrix protein T4-C (T4C) of Paramecium tetraurelia.